Here is a 119-residue protein sequence, read N- to C-terminus: Large ribosomal subunit protein bL20 (119 aa).

The protein belongs to the bacterial ribosomal protein bL20 family.

Its function is as follows. Binds directly to 23S ribosomal RNA and is necessary for the in vitro assembly process of the 50S ribosomal subunit. It is not involved in the protein synthesizing functions of that subunit. The protein is Large ribosomal subunit protein bL20 of Paracoccus denitrificans (strain Pd 1222).